A 1392-amino-acid polypeptide reads, in one-letter code: MKRLLAAAGKGVRGPEPPNPFSERVYTEKDYGTIYFGDLGKIHTAASRGQVQKLEKMTVGKKPVNLNKRDMKKRTALHWACVNGHAEVVTFLVDRKCQLNVLDGEGRTPLMKALQCEREACANILIDAGADLNYVDVYGNTALHYAVYSENLLMVATLLSYGAVIEVQNKASLTPLLLAIQKRSKQTVEFLLTKNANANAFNESKCTALMLAICEGSSEIVGMLLQQNVDVFAEDIHGITAERYAAACGVNYIHQQLLEHIRKLPKNPQNTNPEGTSTGTPDEAAPLAERTPDTAESLLEKTPDEAARLVEGTSAKIQCLGKATSGKFEQSTEETPRKILRPTKETSEKFSWPAKERSRKITWEEKETSVKTECVAGVTPNKTEVLEKGTSNMIACPTKETSTKASTNVDVSSVEPIFSLFGTRTIENSQCTKVEEDFNLATKIISKSAAQNYTCLPDATYQKDIKTINHKIEDQMFPSESKREEDEEYSWDSGSLFESSAKTQVCIPESMYQKVMEINREVEELPEKPSAFKPAVEMQKTVPNKAFELKNEQTLRAAQMFPSESKQKDDEENSWDSESPCETVSQKDVYLPKATHQKEFDTLSGKLEESPVKDGLLKPTCGRKVSLPNKALELKDRETFKAESPDKDGLLKPTCGRKVSLPNKALELKDRETLKAESPDNDGLLKPTCGRKVSLPNKALELKDRETFKAAQMFPSESKQKDDEENSWDFESFLETLLQNDVCLPKATHQKEFDTLSGKLEESPDKDGLLKPTCGMKISLPNKALELKDRETFKAEDVSSVESTFSLFGKPTTENSQSTKVEEDFNLTTKEGATKTVTGQQERDIGIIERAPQDQTNKMPTSELGRKEDTKSTSDSEIISVSDTQNYECLPEATYQKEIKTTNGKIEESPEKPSHFEPATEMQNSVPNKGLEWKNKQTLRADSTTLSKILDALPSCERGRELKKDNCEQITAKMEQTKNKFCVLQKELSEAKEIKSQLENQKAKWEQELCSVRLTLNQEEEKRRNVDILKEKIRPEEQLRKKLEVKQQLEQTLRIQDIELKSVTSNLNQVSHTHESENDLFHENCMLKKEIAMLKLEVATLKHQHQVKENKYFEDIKILQEKNAELQMTLKLKQKTVTKRASQYREQLKVLTAENTMLTSKLKEKQDKEILETEIESHHPRLASALQDHDQSVTSRKNQELAFHSAGDAPLQGIMNVDVSNTIYNNEVLHQPLYEAQRKSKSPKINLNYAGDDLRENALVSEHAQRDRCETQCQMKKAEHMYQNEQDNVDKHTEQQESLEQKLFQLESKNRWLRQQLVYAHKKVNKSKVTINIQFPEMKMQRHLNEKNEEVFNYGNHLKERIDQYEKEKAEREVSIKKYKYFSNFLKESGLG.

Residues 1–21 (MKRLLAAAGKGVRGPEPPNPF) are disordered. ANK repeat units follow at residues 72-101 (KKRTALHWACVNGHAEVVTFLVDRKCQLNV), 105-134 (EGRTPLMKALQCEREACANILIDAGADLNY), 138-167 (YGNTALHYAVYSENLLMVATLLSYGAVIEV), 171-200 (ASLTPLLLAIQKRSKQTVEFLLTKNANANA), and 204-233 (SKCTALMLAICEGSSEIVGMLLQQNVDVFA). Disordered regions lie at residues 265–292 (PKNPQNTNPEGTSTGTPDEAAPLAERTP), 558–587 (AQMFPSESKQKDDEENSWDSESPCETVSQK), 636–656 (DRETFKAESPDKDGLLKPTCG), 671–690 (RETLKAESPDNDGLLKPTCG), 830–877 (KEGA…SDSE), and 904–926 (GKIEESPEKPSHFEPATEMQNSV). Composition is skewed to polar residues over residues 267-280 (NPQNTNPEGTSTGT) and 576-586 (DSESPCETVSQ). Residues 636 to 650 (DRETFKAESPDKDGL) are compositionally biased toward basic and acidic residues. Positions 830–840 (KEGATKTVTGQ) are enriched in polar residues. 2 stretches are compositionally biased toward basic and acidic residues: residues 864–874 (LGRKEDTKSTS) and 904–915 (GKIEESPEKPSH). 2 coiled-coil regions span residues 960-1168 (RELK…KQDK) and 1270-1318 (ETQC…QQLV).

In terms of tissue distribution, expressed in brain, breast and testis.

In Homo sapiens (Human), this protein is Ankyrin repeat domain-containing protein 30B (ANKRD30B).